We begin with the raw amino-acid sequence, 452 residues long: MEIRQIFEQHSGLLDKEVEILGRVRSNRQGKFVSFMILNDGTTFTDLQVVYKTKGYEQALQARVSSIVKVVGRVVLTPEKQQKFEVQADEIELIDQAIEDYPLQKKEHTTEYLREIAHLRAKTKTFNAIFKIRSAAAYAIHRFFNEKNFVYIHSPIITSNDAEGAGEAFLVTTREDADYEKDFFGKKASLTVSGQLHAEAFAQAFKKVYTFGPTFRAENSNTAKHAAEFWMIEPEVAFADLKDNIQLIQDMVKYIINYIFKHNRRELEFCNEQLENGLIDKLNNVRNSEFKVTTYTEAIEILKQAVKDGHKFEVSDIEFGLDLGTEHERYICEQVNKAPTFVTNYPKEIKAFYMKQNDDNKTVAAVDLLVPGIGELVGGSQREDNYEKLIKRCKEVNIDIDQLEWYNNLRLYGYYKSAGFGLGFERLVMYITGASNIRDVIPFPRTPKNLLF.

The protein belongs to the class-II aminoacyl-tRNA synthetase family. As to quaternary structure, homodimer.

It is found in the cytoplasm. It catalyses the reaction tRNA(Asn) + L-asparagine + ATP = L-asparaginyl-tRNA(Asn) + AMP + diphosphate + H(+). The polypeptide is Asparagine--tRNA ligase (Mycoplasma mycoides subsp. mycoides SC (strain CCUG 32753 / NCTC 10114 / PG1)).